The sequence spans 295 residues: N-acetylmuramic acid 6-phosphate etherase (295 aa).

Residues 54 to 217 (VIASFRQGGR…STASMIGIGK (164 aa)) enclose the SIS domain. The active-site Proton donor is Glu82. The active site involves Glu113.

The protein belongs to the GCKR-like family. MurNAc-6-P etherase subfamily. In terms of assembly, homodimer.

The enzyme catalyses N-acetyl-D-muramate 6-phosphate + H2O = N-acetyl-D-glucosamine 6-phosphate + (R)-lactate. The protein operates within amino-sugar metabolism; N-acetylmuramate degradation. Its function is as follows. Specifically catalyzes the cleavage of the D-lactyl ether substituent of MurNAc 6-phosphate, producing GlcNAc 6-phosphate and D-lactate. The chain is N-acetylmuramic acid 6-phosphate etherase from Geobacillus sp. (strain WCH70).